We begin with the raw amino-acid sequence, 338 residues long: Tryptophan--tRNA ligase (338 aa).

ATP contacts are provided by residues 11–13 (QPS) and 19–20 (GN). A 'HIGH' region motif is present at residues 12 to 20 (PSGELSIGN). Residue aspartate 135 coordinates L-tryptophan. Residues 147 to 149 (GSD), valine 189, and 198 to 202 (KMSKS) each bind ATP. The 'KMSKS' region signature appears at 198-202 (KMSKS).

Belongs to the class-I aminoacyl-tRNA synthetase family. Homodimer.

It localises to the cytoplasm. The catalysed reaction is tRNA(Trp) + L-tryptophan + ATP = L-tryptophyl-tRNA(Trp) + AMP + diphosphate + H(+). Catalyzes the attachment of tryptophan to tRNA(Trp). The protein is Tryptophan--tRNA ligase of Vibrio parahaemolyticus serotype O3:K6 (strain RIMD 2210633).